The primary structure comprises 159 residues: Transcriptional repressor NrdR (159 aa).

The tract at residues 1-21 (MRCPKCQHNKSNVIDSRQAED) is disordered. A zinc finger lies at 3-34 (CPKCQHNKSNVIDSRQAEDGNTIRRRRECDAC). One can recognise an ATP-cone domain in the interval 49 to 139 (LLVVKKDGTR…VYRSFKDVDE (91 aa)).

The protein belongs to the NrdR family. Zn(2+) serves as cofactor.

Functionally, negatively regulates transcription of bacterial ribonucleotide reductase nrd genes and operons by binding to NrdR-boxes. The sequence is that of Transcriptional repressor NrdR from Streptococcus thermophilus (strain CNRZ 1066).